The primary structure comprises 323 residues: Glyoxylate/hydroxypyruvate reductase HPR3 (323 aa).

NADP(+) contacts are provided by residues 160–163, 182–184, and 238–240; these read LGSI, SRS, and VGR. Residues R240 and E269 contribute to the active site. H287 serves as the catalytic Proton donor. An NADP(+)-binding site is contributed by 287-289; the sequence is HFA.

It belongs to the D-isomer specific 2-hydroxyacid dehydrogenase family. GyaR subfamily. As to quaternary structure, homodimer.

The enzyme catalyses glycolate + NADP(+) = glyoxylate + NADPH + H(+). It carries out the reaction (R)-glycerate + NADP(+) = 3-hydroxypyruvate + NADPH + H(+). With respect to regulation, inhibited by oxalate. Catalyzes the NADPH-dependent reduction of glyoxylate and hydroxypyruvate (HP) into glycolate and glycerate. Mostly active in the presence of NADPH and glyoxylate. This is Glyoxylate/hydroxypyruvate reductase HPR3 (HPR3) from Arabidopsis thaliana (Mouse-ear cress).